The primary structure comprises 475 residues: Lactate utilization protein B (475 aa).

4Fe-4S ferredoxin-type domains lie at 304 to 334 (GTEF…GHSY) and 353 to 382 (YEDH…LHEL). Residues C313, C316, C319, C323, C366, C369, and C373 each coordinate [4Fe-4S] cluster.

This sequence belongs to the LutB/YkgF family.

Functionally, is involved in L-lactate degradation and allows cells to grow with lactate as the sole carbon source. Has probably a role as an electron transporter during oxidation of L-lactate. In Shouchella clausii (strain KSM-K16) (Alkalihalobacillus clausii), this protein is Lactate utilization protein B.